A 394-amino-acid chain; its full sequence is Putative gustatory receptor 22a (394 aa).

At 1 to 16 (MSQPKRIHRICKGLAR) the chain is on the cytoplasmic side. A helical transmembrane segment spans residues 17–37 (FTIRATLYGSWVLGLFPFTFD). The Extracellular segment spans residues 38 to 47 (SRKRRLNRSK). Asn44 carries N-linked (GlcNAc...) asparagine glycosylation. Residues 48 to 68 (WLLAYGLVLNLTLLVLSMLPS) traverse the membrane as a helical segment. The Cytoplasmic portion of the chain corresponds to 69–148 (TDDHNSVKVE…HTFNRYVIEK (80 aa)). The chain crosses the membrane as a helical span at residues 149 to 169 (GLVIILEIGSSLVLYFGIPNS). Lys170 is a topological domain (extracellular). A helical membrane pass occupies residues 171–191 (IVVYEAVCIYIVQLEVLMVVM). Residues 192 to 256 (HFHLAVIYIY…TAIYDIQVTL (65 aa)) are Cytoplasmic-facing. Residues 257–277 (FMATLFSVNIIVGHVLVICWI) traverse the membrane as a helical segment. Asn278 carries N-linked (GlcNAc...) asparagine glycosylation. The Extracellular segment spans residues 278–281 (NITR). A helical transmembrane segment spans residues 282 to 302 (FSLLVIFLLFPQALIINFWDL). The Cytoplasmic segment spans residues 303-361 (WQGIAFCDLAESTGKKTSMILKLFNDMENMDQETERRVTEFTLFCSHRRLKVCHLGLLD). Residues 362–382 (INYEMGFRMIITNILYVVFLV) form a helical membrane-spanning segment. Over 383–394 (QFDYMNLKFKTD) the chain is Extracellular.

The protein belongs to the insect chemoreceptor superfamily. Gustatory receptor (GR) family. Gr22e subfamily. Expressed in neurons of the terminal external chemosensory organ of larvae.

Its subcellular location is the cell membrane. In terms of biological role, probable gustatory receptor which mediates acceptance or avoidance behavior, depending on its substrates. The polypeptide is Putative gustatory receptor 22a (Gr22a) (Drosophila melanogaster (Fruit fly)).